Reading from the N-terminus, the 300-residue chain is UDP-3-O-acyl-N-acetylglucosamine deacetylase (300 aa).

Residues His-76, His-235, and Asp-239 each contribute to the Zn(2+) site. His-262 serves as the catalytic Proton donor.

It belongs to the LpxC family. The cofactor is Zn(2+).

The catalysed reaction is a UDP-3-O-[(3R)-3-hydroxyacyl]-N-acetyl-alpha-D-glucosamine + H2O = a UDP-3-O-[(3R)-3-hydroxyacyl]-alpha-D-glucosamine + acetate. The protein operates within glycolipid biosynthesis; lipid IV(A) biosynthesis; lipid IV(A) from (3R)-3-hydroxytetradecanoyl-[acyl-carrier-protein] and UDP-N-acetyl-alpha-D-glucosamine: step 2/6. Its function is as follows. Catalyzes the hydrolysis of UDP-3-O-myristoyl-N-acetylglucosamine to form UDP-3-O-myristoylglucosamine and acetate, the committed step in lipid A biosynthesis. This Halorhodospira halophila (strain DSM 244 / SL1) (Ectothiorhodospira halophila (strain DSM 244 / SL1)) protein is UDP-3-O-acyl-N-acetylglucosamine deacetylase.